The chain runs to 244 residues: tRNA (guanine-N(7)-)-methyltransferase (244 aa).

Polar residues predominate over residues 1–10 (MSDTPQSPAQ). The interval 1 to 20 (MSDTPQSPAQDSLAEHDEAR) is disordered. Positions 74, 99, 126, and 149 each coordinate S-adenosyl-L-methionine. Asp149 is a catalytic residue. Residues Lys153, Asp185, and 222 to 225 (TKFE) each bind substrate.

Belongs to the class I-like SAM-binding methyltransferase superfamily. TrmB family.

It catalyses the reaction guanosine(46) in tRNA + S-adenosyl-L-methionine = N(7)-methylguanosine(46) in tRNA + S-adenosyl-L-homocysteine. It participates in tRNA modification; N(7)-methylguanine-tRNA biosynthesis. Its function is as follows. Catalyzes the formation of N(7)-methylguanine at position 46 (m7G46) in tRNA. This is tRNA (guanine-N(7)-)-methyltransferase from Pseudomonas aeruginosa (strain ATCC 15692 / DSM 22644 / CIP 104116 / JCM 14847 / LMG 12228 / 1C / PRS 101 / PAO1).